The sequence spans 588 residues: Juvenile hormone esterase (588 aa).

Residues 1 to 23 form the signal peptide; that stretch reads MKFPKNLFLVLFYTSWKFCDVCA. 2 N-linked (GlcNAc...) asparagine glycosylation sites follow: Asn-79 and Asn-83. The cysteines at positions 91 and 109 are disulfide-linked. Ser-214 acts as the Acyl-ester intermediate in catalysis. The N-linked (GlcNAc...) asparagine glycan is linked to Asn-257. Residues Cys-268 and Cys-281 are joined by a disulfide bond. Glu-350 functions as the Charge relay system in the catalytic mechanism. Residues Asn-389, Asn-396, and Asn-472 are each glycosylated (N-linked (GlcNAc...) asparagine). Residue His-479 is the Charge relay system of the active site.

It belongs to the type-B carboxylesterase/lipase family.

The protein resides in the secreted. The enzyme catalyses juvenile hormone III + H2O = juvenile hormone III carboxylate + methanol + H(+). Inhibited by 3-octylthio-1,1,1-trifluoro-2-propanone (OTFP), a specific inhibitor of juvenile hormone esterase (JHE), but not by diisopropyl fluorophosphate (DFP), a serine enzyme inhibitor. In terms of biological role, may function as a juvenile hormone (JH)-specific degradation enzyme in vivo decreasing JH activity. Hydrolyzes JH III in vitro. Hydrolyzes effectively also methyl hepthylthioacetothioate (HEPTAT), a synthetic substrate. Of the general esterase substrates, it has preference for 2-naphthyl acetate (2-NA) and shows a weak activity for 1-NA and 4-nitrophenylacetate (4-NPA). This Tribolium castaneum (Red flour beetle) protein is Juvenile hormone esterase.